We begin with the raw amino-acid sequence, 338 residues long: Ketol-acid reductoisomerase (NADP(+)) (338 aa).

The KARI N-terminal Rossmann domain maps to 1 to 181; it reads MKVYYDKDCD…GGGRTGIIET (181 aa). Residues 24 to 27, Arg-47, Ser-50, Thr-52, and 82 to 85 contribute to the NADP(+) site; these read YGSQ and DEFQ. The active site involves His-107. Gly-133 is an NADP(+) binding site. The 146-residue stretch at 182-327 folds into the KARI C-terminal knotted domain; the sequence is TFKDETETDL…EQLRAMMPWI (146 aa). Residues Asp-190, Glu-194, Glu-226, and Glu-230 each coordinate Mg(2+). Ser-251 lines the substrate pocket.

This sequence belongs to the ketol-acid reductoisomerase family. The cofactor is Mg(2+).

It carries out the reaction (2R)-2,3-dihydroxy-3-methylbutanoate + NADP(+) = (2S)-2-acetolactate + NADPH + H(+). The catalysed reaction is (2R,3R)-2,3-dihydroxy-3-methylpentanoate + NADP(+) = (S)-2-ethyl-2-hydroxy-3-oxobutanoate + NADPH + H(+). The protein operates within amino-acid biosynthesis; L-isoleucine biosynthesis; L-isoleucine from 2-oxobutanoate: step 2/4. Its pathway is amino-acid biosynthesis; L-valine biosynthesis; L-valine from pyruvate: step 2/4. In terms of biological role, involved in the biosynthesis of branched-chain amino acids (BCAA). Catalyzes an alkyl-migration followed by a ketol-acid reduction of (S)-2-acetolactate (S2AL) to yield (R)-2,3-dihydroxy-isovalerate. In the isomerase reaction, S2AL is rearranged via a Mg-dependent methyl migration to produce 3-hydroxy-3-methyl-2-ketobutyrate (HMKB). In the reductase reaction, this 2-ketoacid undergoes a metal-dependent reduction by NADPH to yield (R)-2,3-dihydroxy-isovalerate. The sequence is that of Ketol-acid reductoisomerase (NADP(+)) from Ectopseudomonas mendocina (strain ymp) (Pseudomonas mendocina).